A 333-amino-acid chain; its full sequence is Isoaspartyl peptidase/L-asparaginase (333 aa).

The active-site Nucleophile is the Thr191. Residues 219–222 and 242–245 each bind substrate; these read RVGD and TGHG.

Belongs to the Ntn-hydrolase family. In terms of assembly, heterodimer of an alpha and beta chain produced by autocleavage. This heterodimer may then dimerize in turn, giving rise to a heterotetramer. In terms of processing, cleaved into an alpha and beta chain by autocatalysis; this activates the enzyme. The N-terminal residue of the beta subunit is responsible for the nucleophile hydrolase activity. In terms of tissue distribution, present in testis, brain, liver, kidney, heart and skeletal muscle. In brain, specifically present in the astrocytic lineage. Present in sperm (at protein level).

It localises to the cytoplasm. It carries out the reaction L-asparagine + H2O = L-aspartate + NH4(+). It catalyses the reaction Cleavage of a beta-linked Asp residue from the N-terminus of a polypeptide.. Functionally, has both L-asparaginase and beta-aspartyl peptidase activity. Is highly active with L-Asp beta-methyl ester. Besides, has catalytic activity toward beta-aspartyl dipeptides and their methyl esters, including beta-L-Asp-L-Phe, beta-L-Asp-L-Phe methyl ester (aspartame), beta-L-Asp-L-Ala, beta-L-Asp-L-Leu and beta-L-Asp-L-Lys. Does not have aspartylglucosaminidase activity and is inactive toward GlcNAc-L-Asn. Likewise, has no activity toward glutamine. May be involved in the production of L-aspartate, which can act as an excitatory neurotransmitter in some brain regions. This chain is Isoaspartyl peptidase/L-asparaginase (Asrgl1), found in Rattus norvegicus (Rat).